Reading from the N-terminus, the 342-residue chain is tRNA (guanine(26)-N(2))-dimethyltransferase (342 aa).

The Trm1 methyltransferase domain maps to 1–336; it reads MRITEGSAVI…CPYAEVSEIL (336 aa). Residues arginine 35, arginine 60, and glutamate 76 each contribute to the S-adenosyl-L-methionine site.

Belongs to the class I-like SAM-binding methyltransferase superfamily. Trm1 family.

It carries out the reaction guanosine(26) in tRNA + 2 S-adenosyl-L-methionine = N(2)-dimethylguanosine(26) in tRNA + 2 S-adenosyl-L-homocysteine + 2 H(+). Its function is as follows. Dimethylates a single guanine residue at position 26 of a number of tRNAs using S-adenosyl-L-methionine as donor of the methyl groups. This chain is tRNA (guanine(26)-N(2))-dimethyltransferase, found in Thermoplasma volcanium (strain ATCC 51530 / DSM 4299 / JCM 9571 / NBRC 15438 / GSS1).